The primary structure comprises 348 residues: Beta-hexosaminidase (348 aa).

Residues Asp-64, Arg-72, Arg-138, and 168–169 (KH) each bind substrate. The active-site Proton donor/acceptor is His-181. Asp-252 functions as the Nucleophile in the catalytic mechanism.

Belongs to the glycosyl hydrolase 3 family. NagZ subfamily.

The protein resides in the cytoplasm. It catalyses the reaction Hydrolysis of terminal non-reducing N-acetyl-D-hexosamine residues in N-acetyl-beta-D-hexosaminides.. The protein operates within cell wall biogenesis; peptidoglycan recycling. Plays a role in peptidoglycan recycling by cleaving the terminal beta-1,4-linked N-acetylglucosamine (GlcNAc) from peptide-linked peptidoglycan fragments, giving rise to free GlcNAc, anhydro-N-acetylmuramic acid and anhydro-N-acetylmuramic acid-linked peptides. The sequence is that of Beta-hexosaminidase from Nitrosomonas eutropha (strain DSM 101675 / C91 / Nm57).